The primary structure comprises 372 residues: Septin-1 (372 aa).

A Septin-type G domain is found at 27–301; the sequence is KGFDFTLMVA…EGYRARCLQS (275 aa). The interval 37–44 is G1 motif; the sequence is GESGLGKS. GTP contacts are provided by residues 37 to 44, T71, G97, and 176 to 184; these read GESGLGKS and KADALMPQE. Residues 94-97 are G3 motif; sequence DTPG. The interval 175–178 is G4 motif; that stretch reads GKAD. A Phosphoserine modification is found at S211. GTP-binding residues include G234 and R250. S253 is modified (phosphoserine; by AURKB). Position 256 is a phosphothreonine (T256). S312 and S320 each carry phosphoserine; by AURKB. The interval 352–372 is disordered; that stretch reads LEKMQAQMQQSQAQGEQSDAL. Positions 355-372 are enriched in low complexity; sequence MQAQMQQSQAQGEQSDAL.

The protein belongs to the TRAFAC class TrmE-Era-EngA-EngB-Septin-like GTPase superfamily. Septin GTPase family. As to quaternary structure, septins polymerize into heterooligomeric protein complexes that form filaments, and can associate with cellular membranes, actin filaments and microtubules. GTPase activity is required for filament formation. Interacts with AURKB. As to expression, expressed at high levels in lymphoid and hematopoietic tissues.

It localises to the cytoplasm. It is found in the cytoskeleton. The protein resides in the microtubule organizing center. The protein localises to the centrosome. Its subcellular location is the midbody. In terms of biological role, filament-forming cytoskeletal GTPase. May play a role in cytokinesis (Potential). The polypeptide is Septin-1 (Homo sapiens (Human)).